The following is a 104-amino-acid chain: Large ribosomal subunit protein uL23 (104 aa).

Belongs to the universal ribosomal protein uL23 family. Part of the 50S ribosomal subunit. Contacts protein L29, and trigger factor when it is bound to the ribosome.

One of the early assembly proteins it binds 23S rRNA. One of the proteins that surrounds the polypeptide exit tunnel on the outside of the ribosome. Forms the main docking site for trigger factor binding to the ribosome. The protein is Large ribosomal subunit protein uL23 of Leptospira interrogans serogroup Icterohaemorrhagiae serovar copenhageni (strain Fiocruz L1-130).